We begin with the raw amino-acid sequence, 340 residues long: Phosphoribosylformylglycinamidine cyclo-ligase (340 aa).

Belongs to the AIR synthase family.

The protein resides in the cytoplasm. It catalyses the reaction 2-formamido-N(1)-(5-O-phospho-beta-D-ribosyl)acetamidine + ATP = 5-amino-1-(5-phospho-beta-D-ribosyl)imidazole + ADP + phosphate + H(+). It functions in the pathway purine metabolism; IMP biosynthesis via de novo pathway; 5-amino-1-(5-phospho-D-ribosyl)imidazole from N(2)-formyl-N(1)-(5-phospho-D-ribosyl)glycinamide: step 2/2. The protein is Phosphoribosylformylglycinamidine cyclo-ligase of Streptococcus pyogenes serotype M2 (strain MGAS10270).